The chain runs to 92 residues: MHESPILSNGDQPNRWAGLNRRVAALLLALIGFYRTFISPLLGPRCRFTPTCSAYGLEAIQRHGPWRGGWLTLKRVLRCHPFTPCGCDPVPD.

Belongs to the UPF0161 family.

The protein resides in the cell inner membrane. In terms of biological role, could be involved in insertion of integral membrane proteins into the membrane. The protein is Putative membrane protein insertion efficiency factor of Synechococcus sp. (strain CC9902).